The chain runs to 133 residues: Large ribosomal subunit protein bL21 (133 aa).

Positions 1–22 (MAEKPAAKPKAAAAKAEAKDQS) are disordered.

The protein belongs to the bacterial ribosomal protein bL21 family. Part of the 50S ribosomal subunit. Contacts protein L20.

Functionally, this protein binds to 23S rRNA in the presence of protein L20. This chain is Large ribosomal subunit protein bL21, found in Prochlorococcus marinus (strain MIT 9303).